The chain runs to 375 residues: ELAV-like protein 2 (375 aa).

RRM domains follow at residues 67-145 (TNLI…YARP), 153-233 (ANLY…FANN), and 292-370 (WCIF…FKTS).

This sequence belongs to the RRM elav family. Part of a ribonucleoprotein (RNP) complex, at least composed of elavl1/elrA and/or elavl2/elrB, igf2bp3/vg1RBP, ddx6/Xp54, ybx2/frgy2, lsm14b/rap55b and, in a subset of RNP complexes, stau1/staufen. Binds RNA as a homooligomer.

Its subcellular location is the cytoplasm. The protein localises to the cell cortex. In terms of biological role, binds to poly-U elements and AU-rich elements (AREs) in the 3'-UTR of target mRNAs. Required for the vegetal localization of vg1 mRNA. Probably required for nervous system development. The protein is ELAV-like protein 2 of Xenopus tropicalis (Western clawed frog).